The following is a 789-amino-acid chain: Phenylalanine--tRNA ligase beta subunit (789 aa).

Positions 38–151 (KKHLQSFVVV…NTYNVGESFF (114 aa)) constitute a tRNA-binding domain. The B5 domain occupies 398-474 (HNDILLNFSP…RLYGYDKILE (77 aa)). 4 residues coordinate Mg(2+): aspartate 452, aspartate 458, glutamate 461, and glutamate 462. One can recognise an FDX-ACB domain in the interval 694–787 (LRYQSVKRDF…ISKGFNGILR (94 aa)).

Belongs to the phenylalanyl-tRNA synthetase beta subunit family. Type 1 subfamily. Tetramer of two alpha and two beta subunits. The cofactor is Mg(2+).

Its subcellular location is the cytoplasm. The enzyme catalyses tRNA(Phe) + L-phenylalanine + ATP = L-phenylalanyl-tRNA(Phe) + AMP + diphosphate + H(+). This chain is Phenylalanine--tRNA ligase beta subunit, found in Ehrlichia ruminantium (strain Gardel).